Reading from the N-terminus, the 147-residue chain is UPF0178 protein CV_1768 (147 aa).

Belongs to the UPF0178 family.

This Chromobacterium violaceum (strain ATCC 12472 / DSM 30191 / JCM 1249 / CCUG 213 / NBRC 12614 / NCIMB 9131 / NCTC 9757 / MK) protein is UPF0178 protein CV_1768.